Consider the following 273-residue polypeptide: Undecaprenyl-diphosphatase (273 aa).

Helical transmembrane passes span 3–23, 48–68, 92–112, 116–136, 152–172, 193–213, 220–240, and 252–272; these read IVEIIKAIILGMVEGLTEFAP, AANTFKVVIQLGSILAVVVVF, MQVIVGLIPAGVLGVLFEDYI, LFSTATVLIGLVLGALLMIAA, ITYKQALIVGLVQCLSLWPGF, ADFTFIMAVPIMMGASVLSLL, TIDALPFFTAGFISAFLFALI, and IRLVPFAVYRIVLALVIYIVY.

It belongs to the UppP family.

Its subcellular location is the cell membrane. It carries out the reaction di-trans,octa-cis-undecaprenyl diphosphate + H2O = di-trans,octa-cis-undecaprenyl phosphate + phosphate + H(+). In terms of biological role, catalyzes the dephosphorylation of undecaprenyl diphosphate (UPP). Confers resistance to bacitracin. In Geobacillus sp. (strain WCH70), this protein is Undecaprenyl-diphosphatase.